A 178-amino-acid chain; its full sequence is GTP-dependent dephospho-CoA kinase (178 aa).

5 residues coordinate GTP: Asp-55, Val-57, Asp-74, Lys-76, and Glu-127.

Belongs to the GTP-dependent DPCK family.

It carries out the reaction 3'-dephospho-CoA + GTP = GDP + CoA + H(+). It participates in cofactor biosynthesis; coenzyme A biosynthesis. In terms of biological role, catalyzes the GTP-dependent phosphorylation of the 3'-hydroxyl group of dephosphocoenzyme A to form coenzyme A (CoA). This Saccharolobus islandicus (strain Y.G.57.14 / Yellowstone #1) (Sulfolobus islandicus) protein is GTP-dependent dephospho-CoA kinase.